The primary structure comprises 62 residues: Large ribosomal subunit protein bL28 (62 aa).

Belongs to the bacterial ribosomal protein bL28 family.

The sequence is that of Large ribosomal subunit protein bL28 from Caldicellulosiruptor bescii (strain ATCC BAA-1888 / DSM 6725 / KCTC 15123 / Z-1320) (Anaerocellum thermophilum).